Reading from the N-terminus, the 787-residue chain is Endonuclease MutS2 (787 aa).

335-342 (GPNTGGKT) provides a ligand contact to ATP. The region spanning 712–787 (LDLRGERYED…GLGNTVIELK (76 aa)) is the Smr domain.

This sequence belongs to the DNA mismatch repair MutS family. MutS2 subfamily. Homodimer. Binds to stalled ribosomes, contacting rRNA.

Endonuclease that is involved in the suppression of homologous recombination and thus may have a key role in the control of bacterial genetic diversity. Functionally, acts as a ribosome collision sensor, splitting the ribosome into its 2 subunits. Detects stalled/collided 70S ribosomes which it binds and splits by an ATP-hydrolysis driven conformational change. Acts upstream of the ribosome quality control system (RQC), a ribosome-associated complex that mediates the extraction of incompletely synthesized nascent chains from stalled ribosomes and their subsequent degradation. Probably generates substrates for RQC. In Shouchella clausii (strain KSM-K16) (Alkalihalobacillus clausii), this protein is Endonuclease MutS2.